The primary structure comprises 46 residues: uncharacterized protein (46 aa).

Residues 1 to 46 (MEVTPLETGRARSHQKASTAAQPHAADEKMTGSTARRYLSQDHQSV) are disordered.

This is an uncharacterized protein from Treponema pallidum (strain Nichols).